The primary structure comprises 609 residues: NADH-ubiquinone oxidoreductase chain 5 (609 aa).

15 helical membrane passes run 6 to 26 (SSIL…MTNL), 35 to 55 (YATS…LLFF), 84 to 104 (YFSI…MQFS), 116 to 138 (RFIK…NNLF), 140 to 160 (LFIG…WWYG), 171 to 191 (AILY…WFCL), 240 to 260 (TPVS…FLMI), 272 to 292 (IMTA…ICAL), 300 to 319 (IVAF…LGIN), 330 to 350 (THAF…HSLN), 365 to 385 (MPFT…MPFL), 409 to 429 (MITL…IYFV), 456 to 476 (LALG…PTNI), 481 to 501 (MPWH…AIAL), and 581 to 601 (GLIK…FILH).

It belongs to the complex I subunit 5 family. As to quaternary structure, core subunit of respiratory chain NADH dehydrogenase (Complex I) which is composed of 45 different subunits.

Its subcellular location is the mitochondrion inner membrane. The catalysed reaction is a ubiquinone + NADH + 5 H(+)(in) = a ubiquinol + NAD(+) + 4 H(+)(out). In terms of biological role, core subunit of the mitochondrial membrane respiratory chain NADH dehydrogenase (Complex I) which catalyzes electron transfer from NADH through the respiratory chain, using ubiquinone as an electron acceptor. Essential for the catalytic activity and assembly of complex I. This Rattus norvegicus (Rat) protein is NADH-ubiquinone oxidoreductase chain 5.